Here is a 324-residue protein sequence, read N- to C-terminus: Beta-ketoacyl-[acyl-carrier-protein] synthase III (324 aa).

Active-site residues include C112 and H249. The ACP-binding stretch occupies residues 250-254 (QANRR). N279 is a catalytic residue.

The protein belongs to the thiolase-like superfamily. FabH family. In terms of assembly, homodimer.

It is found in the cytoplasm. The enzyme catalyses malonyl-[ACP] + acetyl-CoA + H(+) = 3-oxobutanoyl-[ACP] + CO2 + CoA. It participates in lipid metabolism; fatty acid biosynthesis. Functionally, catalyzes the condensation reaction of fatty acid synthesis by the addition to an acyl acceptor of two carbons from malonyl-ACP. Catalyzes the first condensation reaction which initiates fatty acid synthesis and may therefore play a role in governing the total rate of fatty acid production. Possesses both acetoacetyl-ACP synthase and acetyl transacylase activities. Its substrate specificity determines the biosynthesis of branched-chain and/or straight-chain of fatty acids. The polypeptide is Beta-ketoacyl-[acyl-carrier-protein] synthase III (Streptococcus pyogenes serotype M3 (strain ATCC BAA-595 / MGAS315)).